The sequence spans 114 residues: U5-lycotoxin-Ls1a (114 aa).

The N-terminal stretch at 1–20 (MKYQILFGVVFLTLLSYCYS) is a signal peptide. A propeptide spanning residues 21 to 45 (EIEDEFENFVDEEMVEADDPFSLAR) is cleaved from the precursor. Intrachain disulfides connect Cys-51-Cys-66, Cys-65-Cys-93, and Cys-77-Cys-91.

It belongs to the neurotoxin 19 (CSTX) family. 04 (U1-Lctx) subfamily. In terms of tissue distribution, expressed by the venom gland.

Its subcellular location is the secreted. The sequence is that of U5-lycotoxin-Ls1a from Lycosa singoriensis (Wolf spider).